We begin with the raw amino-acid sequence, 172 residues long: dCTP deaminase, dUMP-forming (172 aa).

DCTP is bound by residues Arg93–Arg98, Asp111, Thr119–Glu121, Gln138, and Tyr151. Glu121 serves as the catalytic Proton donor/acceptor.

It belongs to the dCTP deaminase family. As to quaternary structure, homotrimer.

It carries out the reaction dCTP + 2 H2O = dUMP + NH4(+) + diphosphate. The protein operates within pyrimidine metabolism; dUMP biosynthesis; dUMP from dCTP: step 1/1. Functionally, bifunctional enzyme that catalyzes both the deamination of dCTP to dUTP and the hydrolysis of dUTP to dUMP without releasing the toxic dUTP intermediate. The polypeptide is dCTP deaminase, dUMP-forming (Hathewaya histolytica (Clostridium histolyticum)).